The sequence spans 362 residues: Heat-inducible transcription repressor HrcA (362 aa).

This sequence belongs to the HrcA family.

Its function is as follows. Negative regulator of class I heat shock genes (grpE-dnaK-dnaJ and groELS operons). Prevents heat-shock induction of these operons. The sequence is that of Heat-inducible transcription repressor HrcA from Bradyrhizobium diazoefficiens (strain JCM 10833 / BCRC 13528 / IAM 13628 / NBRC 14792 / USDA 110).